The following is a 448-amino-acid chain: DEAD-box ATP-dependent RNA helicase CshB (448 aa).

A Q motif motif is present at residues His4–Asn32. The Helicase ATP-binding domain occupies Ile35 to Val206. Ser48 to Ser55 provides a ligand contact to ATP. A DEAD box motif is present at residues Asp154 to Asp157. The Helicase C-terminal domain maps to Asn236 to Ala386. Basic residues predominate over residues Asn400–Phe418. A disordered region spans residues Asn400–Gly448. Basic and acidic residues predominate over residues Lys419–Gln432. Residues Asn438–Gly448 are compositionally biased toward basic residues.

The protein belongs to the DEAD box helicase family. CshB subfamily.

The protein localises to the cytoplasm. The enzyme catalyses ATP + H2O = ADP + phosphate + H(+). Probable DEAD-box RNA helicase. May work in conjunction with the cold shock proteins to ensure proper initiation of transcription at low and optimal temperatures. This Staphylococcus aureus (strain NCTC 8325 / PS 47) protein is DEAD-box ATP-dependent RNA helicase CshB.